The chain runs to 309 residues: uncharacterized protein (309 aa).

Transmembrane regions (helical) follow at residues 28–48 (IIALSSLLTLLINHPSLIMKP), 73–93 (MMLNLFRWVCIAILVLVVIGW), 113–133 (LIVIDGGEQAAAVMTFLLLPI), 157–177 (ITAFISYFVIRIQVAVLYFHS), 220–240 (FVVIPTWGTLLVQIVIFAALF), and 259–279 (IFAVMLGLISFSIIMAGILIL).

It localises to the cell membrane. This is an uncharacterized protein from Bacillus subtilis (strain 168).